The sequence spans 100 residues: Large ribosomal subunit protein uL23 (100 aa).

This sequence belongs to the universal ribosomal protein uL23 family. Part of the 50S ribosomal subunit. Contacts protein L29, and trigger factor when it is bound to the ribosome.

Its function is as follows. One of the early assembly proteins it binds 23S rRNA. One of the proteins that surrounds the polypeptide exit tunnel on the outside of the ribosome. Forms the main docking site for trigger factor binding to the ribosome. The polypeptide is Large ribosomal subunit protein uL23 (Shigella dysenteriae serotype 1 (strain Sd197)).